The following is an 847-amino-acid chain: Follistatin-related protein 5 (847 aa).

The N-terminal stretch at 1 to 20 (MFKCWSVVLVLGFIFLESEG) is a signal peptide. The 53-residue stretch at 83–135 (GQAECACMDLCKRHYKPVCGSDGEFYENHCEVHRAACLKKQKITIVHNEDCFF) folds into the Kazal-like domain. Cystine bridges form between cysteine 89–cysteine 119, cysteine 93–cysteine 112, and cysteine 101–cysteine 133. EF-hand domains lie at 175-210 (RKKL…EELG) and 211-246 (KDLF…QVIQ). Residues aspartate 188, aspartate 190, asparagine 192, glutamate 199, aspartate 226, asparagine 228, aspartate 230, histidine 232, and glutamate 237 each coordinate Ca(2+). 2 Ig-like domains span residues 250–337 (PEDQ…IFQV) and 341–426 (PVIR…EDIS). Intrachain disulfides connect cysteine 270–cysteine 321 and cysteine 362–cysteine 413. 2 N-linked (GlcNAc...) asparagine glycosylation sites follow: asparagine 318 and asparagine 394.

It is found in the secreted. In Homo sapiens (Human), this protein is Follistatin-related protein 5 (FSTL5).